The following is a 423-amino-acid chain: Imidazolonepropionase (423 aa).

His78 and His80 together coordinate Fe(3+). Zn(2+)-binding residues include His78 and His80. The 4-imidazolone-5-propanoate site is built by Arg87, Tyr150, and His183. Tyr150 serves as a coordination point for N-formimidoyl-L-glutamate. His247 contributes to the Fe(3+) binding site. His247 is a Zn(2+) binding site. Glu250 contributes to the 4-imidazolone-5-propanoate binding site. A Fe(3+)-binding site is contributed by Asp322. Asp322 contacts Zn(2+). Residues Asn324 and Gly326 each contribute to the N-formimidoyl-L-glutamate site. Ser327 contacts 4-imidazolone-5-propanoate.

Belongs to the metallo-dependent hydrolases superfamily. HutI family. Requires Zn(2+) as cofactor. Fe(3+) is required as a cofactor.

The protein localises to the cytoplasm. It catalyses the reaction 4-imidazolone-5-propanoate + H2O = N-formimidoyl-L-glutamate. It functions in the pathway amino-acid degradation; L-histidine degradation into L-glutamate; N-formimidoyl-L-glutamate from L-histidine: step 3/3. Catalyzes the hydrolytic cleavage of the carbon-nitrogen bond in imidazolone-5-propanoate to yield N-formimidoyl-L-glutamate. It is the third step in the universal histidine degradation pathway. The chain is Imidazolonepropionase from Bacillus thuringiensis (strain Al Hakam).